A 296-amino-acid polypeptide reads, in one-letter code: Fructose-bisphosphate aldolase class 1 (296 aa).

E175 (proton acceptor) is an active-site residue. The active-site Schiff-base intermediate with dihydroxyacetone-P is K212.

Belongs to the class I fructose-bisphosphate aldolase family.

The enzyme catalyses beta-D-fructose 1,6-bisphosphate = D-glyceraldehyde 3-phosphate + dihydroxyacetone phosphate. It participates in carbohydrate degradation; glycolysis; D-glyceraldehyde 3-phosphate and glycerone phosphate from D-glucose: step 4/4. The polypeptide is Fructose-bisphosphate aldolase class 1 (fda) (Staphylococcus carnosus (strain TM300)).